Here is a 228-residue protein sequence, read N- to C-terminus: Endo-1,4-beta-xylanase B (228 aa).

The signal sequence occupies residues 1-19; sequence MVSFTYLLAAVSAVTGAVA. In terms of domain architecture, GH11 spans 37–227; that stretch reads KRTSPTTGVN…SSGQATMTVS (191 aa). Glu122 serves as the catalytic Nucleophile. The active-site Proton donor is Glu214.

It belongs to the glycosyl hydrolase 11 (cellulase G) family.

It is found in the secreted. The enzyme catalyses Endohydrolysis of (1-&gt;4)-beta-D-xylosidic linkages in xylans.. It participates in glycan degradation; xylan degradation. Inhibited by the proteinaceous endoxylanase inhibitor I from T.aestivum (TAXI-I). Functionally, endo-1,4-beta-xylanase involved in the hydrolysis of xylan, a major structural heterogeneous polysaccharide found in plant biomass representing the second most abundant polysaccharide in the biosphere, after cellulose. Plays an important role in causing fusarium head blight (FHB) on cereal crops. Induces cell death and hydrogen peroxide accumulation in infected wheat leaves. The sequence is that of Endo-1,4-beta-xylanase B (XYLB) from Gibberella zeae (strain ATCC MYA-4620 / CBS 123657 / FGSC 9075 / NRRL 31084 / PH-1) (Wheat head blight fungus).